Reading from the N-terminus, the 539-residue chain is Probable methionine--tRNA ligase, mitochondrial (539 aa).

A 'HIGH' region motif is present at residues 28–38; the sequence is FYVNAAPHLGH. A 'KMSKS' region motif is present at residues 326-330; the sequence is KMSKS. K329 is an ATP binding site.

This sequence belongs to the class-I aminoacyl-tRNA synthetase family.

The protein localises to the mitochondrion matrix. It carries out the reaction tRNA(Met) + L-methionine + ATP = L-methionyl-tRNA(Met) + AMP + diphosphate. This is Probable methionine--tRNA ligase, mitochondrial from Schizosaccharomyces pombe (strain 972 / ATCC 24843) (Fission yeast).